A 459-amino-acid polypeptide reads, in one-letter code: Cysteine--tRNA ligase (459 aa).

Cys29 is a Zn(2+) binding site. Positions 31 to 41 match the 'HIGH' region motif; the sequence is VTTYDYCHIGH. Zn(2+)-binding residues include Cys210, His235, and Glu239. The 'KMSKS' region signature appears at 267 to 271; the sequence is KMSKS. Lys270 is an ATP binding site.

This sequence belongs to the class-I aminoacyl-tRNA synthetase family. In terms of assembly, monomer. Zn(2+) serves as cofactor.

The protein localises to the cytoplasm. It carries out the reaction tRNA(Cys) + L-cysteine + ATP = L-cysteinyl-tRNA(Cys) + AMP + diphosphate. In Idiomarina loihiensis (strain ATCC BAA-735 / DSM 15497 / L2-TR), this protein is Cysteine--tRNA ligase.